We begin with the raw amino-acid sequence, 542 residues long: MARYVFITGGVVSSLGKGIAAAALGALLQARGYRVRLRKLDPYLNVDPGTMSPTQHGEVFVTDDGAETDLDLGHYERFTGRSATKTDNITTGRIYKNIIDKERRGDYLGATVQVIPHVTNEIKDFVIEGNDDYDFVICEIGGTVGDIEAMPFMEAIRQLGNDLPRGTAVYVHLTLMPYIPAAGELKTKPTQHSVKELQALGIHPDILLVRADREIPEAERRKLSLFCNVRPSAVIQALDVANIYDVPIAYHKEGLDDEVLAAFGIEPAPKPRLDPWEEVCNRIRTPEGEVTIAIVGKYTGLKDAYKSLIEALHHGGIANRVKVNLEWIESEVFEKEDPAPYLEKVHGILVPGGFGERGSEGKIHAARFARERKVPYFGICFGMQMAVIEAARNLADVSGASSTEFGPTKEPVVGLMTEWVKGNELQKRTAAGDLGGTMRLGAYKAALKKGTKISDIYGSTDISERHRHRYEVNVDYKDRLENCGLVFSGMSPDGVLPETIEYPDHPWFIGVQYHPELKSRPLDPHPLFASFIEAATEQSRLV.

Residues 1 to 265 (MARYVFITGG…DDEVLAAFGI (265 aa)) are amidoligase domain. Ser13 serves as a coordination point for CTP. Ser13 lines the UTP pocket. Residues 14 to 19 (SLGKGI) and Asp71 contribute to the ATP site. Mg(2+) is bound by residues Asp71 and Glu139. Residues 146 to 148 (DIE), 186 to 191 (KTKPTQ), and Lys222 contribute to the CTP site. Residues 186–191 (KTKPTQ) and Lys222 contribute to the UTP site. Positions 291-541 (TIAIVGKYTG…IEAATEQSRL (251 aa)) constitute a Glutamine amidotransferase type-1 domain. Gly353 contributes to the L-glutamine binding site. Cys380 acts as the Nucleophile; for glutamine hydrolysis in catalysis. Residues 381–384 (FGMQ), Glu404, and Arg469 contribute to the L-glutamine site. Catalysis depends on residues His514 and Glu516.

Belongs to the CTP synthase family. In terms of assembly, homotetramer.

It catalyses the reaction UTP + L-glutamine + ATP + H2O = CTP + L-glutamate + ADP + phosphate + 2 H(+). The catalysed reaction is L-glutamine + H2O = L-glutamate + NH4(+). It carries out the reaction UTP + NH4(+) + ATP = CTP + ADP + phosphate + 2 H(+). It functions in the pathway pyrimidine metabolism; CTP biosynthesis via de novo pathway; CTP from UDP: step 2/2. Allosterically activated by GTP, when glutamine is the substrate; GTP has no effect on the reaction when ammonia is the substrate. The allosteric effector GTP functions by stabilizing the protein conformation that binds the tetrahedral intermediate(s) formed during glutamine hydrolysis. Inhibited by the product CTP, via allosteric rather than competitive inhibition. Catalyzes the ATP-dependent amination of UTP to CTP with either L-glutamine or ammonia as the source of nitrogen. Regulates intracellular CTP levels through interactions with the four ribonucleotide triphosphates. This is CTP synthase from Rhizobium johnstonii (strain DSM 114642 / LMG 32736 / 3841) (Rhizobium leguminosarum bv. viciae).